We begin with the raw amino-acid sequence, 336 residues long: MFYDLARRFMFTRDAEWAHEFALNNLSRFANTPLSAAWSQNIVNKPVNFLGLELKNPVGLAAGLDKNAECITAFAQMGFGFVEVGTVTPRPQAGNDKPRMFRLPQSNAIINRMGFNNKGVDNLVNNVKAANYTGILGINIGKNKDTPNEQGKDDYIHCMRKVFEHASYITVNISSPNTPGLRDLQYGAALDDLLQSLKNEQLDLVAKHGKQVPMLVKIAPDLDPIQIAQVSESLLSNKIDGVIATNTTLERSMVAGQQYADEAGGLSGQPVRERATHVVSELKRLTNGQLPIIGVGGIDDVSSAKEKINAGADLVQIYTGFIYKGPQLIKSIVDSL.

Residues 62–66 (AGLDK) and Thr86 each bind FMN. Lys66 contacts substrate. Residue 111-115 (NRMGF) participates in substrate binding. FMN-binding residues include Asn139 and Asn172. Asn172 serves as a coordination point for substrate. Residue Ser175 is the Nucleophile of the active site. Asn177 serves as a coordination point for substrate. Residues Lys217 and Thr245 each contribute to the FMN site. Substrate is bound at residue 246–247 (NT). FMN-binding positions include Gly268, Gly297, and 318-319 (YT).

Belongs to the dihydroorotate dehydrogenase family. Type 2 subfamily. In terms of assembly, monomer. It depends on FMN as a cofactor.

It is found in the cell membrane. The catalysed reaction is (S)-dihydroorotate + a quinone = orotate + a quinol. It participates in pyrimidine metabolism; UMP biosynthesis via de novo pathway; orotate from (S)-dihydroorotate (quinone route): step 1/1. Its function is as follows. Catalyzes the conversion of dihydroorotate to orotate with quinone as electron acceptor. This is Dihydroorotate dehydrogenase (quinone) from Pseudoalteromonas translucida (strain TAC 125).